The primary structure comprises 371 residues: Solute carrier family 35 member F6 (371 aa).

The N-terminal stretch at 1 to 18 (MAWTKYQLFLAGLMLVTG) is a signal peptide. Transmembrane regions (helical) follow at residues 48–68 (FLQA…FYLL) and 89–109 (LLFL…YVAL). Residues 104 to 160 (LMYVALNMTSASSFQMLRGAVIIFTGLFSVAFLGRRLVLSQWLGILATIAGLVVVGL) enclose the EamA domain. N-linked (GlcNAc...) asparagine glycosylation is present at asparagine 110. The next 7 membrane-spanning stretches (helical) occupy residues 117-137 (FQML…AFLG), 140-160 (LVLS…VVGL), 176-196 (VITG…QMVL), 216-236 (GLFG…IPAG), 261-281 (LIAV…FAGI), 295-312 (LDSL…ALGW), and 317-336 (ALQI…YNGL). The tract at residues 352 to 371 (EESEQERLLGGTRTPINDAS) is disordered. Threonine 365 is modified (phosphothreonine).

Belongs to the SLC35F solute transporter family. Interacts with SLC25A5. In terms of tissue distribution, expressed in pancreatic ductal adenocarcinoma (PDAC) (at protein level). Strongly expressed in prostate and thyroid. Weakly expressed in lung, heart, liver and kidney.

The protein localises to the mitochondrion. It is found in the lysosome membrane. Functionally, involved in the maintenance of mitochondrial membrane potential in pancreatic ductal adenocarcinoma (PDAC) cells. Promotes pancreatic ductal adenocarcinoma (PDAC) cell growth. May play a role as a nucleotide-sugar transporter. The protein is Solute carrier family 35 member F6 (SLC35F6) of Homo sapiens (Human).